Reading from the N-terminus, the 422-residue chain is Glutamate-1-semialdehyde 2,1-aminomutase (422 aa).

Lys-265 carries the N6-(pyridoxal phosphate)lysine modification.

This sequence belongs to the class-III pyridoxal-phosphate-dependent aminotransferase family. HemL subfamily. The cofactor is pyridoxal 5'-phosphate.

It is found in the cytoplasm. It catalyses the reaction (S)-4-amino-5-oxopentanoate = 5-aminolevulinate. It participates in porphyrin-containing compound metabolism; protoporphyrin-IX biosynthesis; 5-aminolevulinate from L-glutamyl-tRNA(Glu): step 2/2. The polypeptide is Glutamate-1-semialdehyde 2,1-aminomutase (Methanococcoides burtonii (strain DSM 6242 / NBRC 107633 / OCM 468 / ACE-M)).